Here is a 62-residue protein sequence, read N- to C-terminus: Short neurotoxin C (62 aa).

Residues 1-16 (RRCFNQQSSQPQTNKS) are compositionally biased toward polar residues. The segment at 1–22 (RRCFNQQSSQPQTNKSCPPGEN) is disordered. Cystine bridges form between C3–C24, C17–C41, C43–C54, and C55–C60.

This sequence belongs to the three-finger toxin family. Short-chain subfamily. Type I alpha-neurotoxin sub-subfamily. As to expression, expressed by the venom gland.

It localises to the secreted. Binds to muscle nicotinic acetylcholine receptor (nAChR) and inhibit acetylcholine from binding to the receptor, thereby impairing neuromuscular transmission. In Laticauda laticaudata (Blue-ringed sea krait), this protein is Short neurotoxin C.